Consider the following 379-residue polypeptide: Cytochrome b (379 aa).

4 consecutive transmembrane segments (helical) span residues 33 to 53, 77 to 98, 113 to 133, and 178 to 198; these read FGSL…FLAM, WLIR…FIHV, WNIG…GYVL, and FFAF…VHLL. Histidine 83 and histidine 97 together coordinate heme b. Positions 182 and 196 each coordinate heme b. Histidine 201 serves as a coordination point for a ubiquinone. Helical transmembrane passes span 226–246, 288–308, 320–340, and 347–367; these read TKDL…ALFF, LGGV…PLLN, VTQI…WIGG, and FTTI…ILIP.

This sequence belongs to the cytochrome b family. In terms of assembly, the cytochrome bc1 complex contains 11 subunits: 3 respiratory subunits (MT-CYB, CYC1 and UQCRFS1), 2 core proteins (UQCRC1 and UQCRC2) and 6 low-molecular weight proteins (UQCRH/QCR6, UQCRB/QCR7, UQCRQ/QCR8, UQCR10/QCR9, UQCR11/QCR10 and a cleavage product of UQCRFS1). This cytochrome bc1 complex then forms a dimer. It depends on heme b as a cofactor.

It is found in the mitochondrion inner membrane. Its function is as follows. Component of the ubiquinol-cytochrome c reductase complex (complex III or cytochrome b-c1 complex) that is part of the mitochondrial respiratory chain. The b-c1 complex mediates electron transfer from ubiquinol to cytochrome c. Contributes to the generation of a proton gradient across the mitochondrial membrane that is then used for ATP synthesis. In Akodon reigi (Reig's grass mouse), this protein is Cytochrome b (MT-CYB).